The sequence spans 757 residues: Transferrin receptor protein 1 (757 aa).

The Cytoplasmic portion of the chain corresponds to 1–67; sequence MMDQARSAIS…KHRRLNGRLC (67 aa). The tract at residues 1 to 67 is mediates interaction with SH3BP4; sequence MMDQARSAIS…KHRRLNGRLC (67 aa). Serine 10 and serine 19 each carry phosphoserine. At tyrosine 20 the chain carries Phosphotyrosine. The Endocytosis signal signature appears at 20–23; it reads YTRF. A Phosphothreonine modification is found at threonine 21. Phosphoserine is present on serine 24. The Stop-transfer sequence motif lies at 58–61; that stretch reads KHRR. Cysteine 67 carries S-palmitoyl cysteine lipidation. Residues 68–88 traverse the membrane as a helical; Signal-anchor for type II membrane protein segment; that stretch reads FGTIAVVIFFLIGFMIGYLGY. Residues 89 to 757 lie on the Extracellular side of the membrane; that stretch reads CKRTEQKDCV…GDIWDIDNEF (669 aa). Residue threonine 103 is glycosylated (O-linked (GalNAc...) threonine). One can recognise a PA domain in the interval 220–310; sequence SKATTVSGKL…GTGDPYTPGF (91 aa). Residues asparagine 248 and asparagine 314 are each glycosylated (N-linked (GlcNAc...) asparagine). The interval 566 to 757 is ligand-binding; it reads NLDTYEKLIQ…GDIWDIDNEF (192 aa). Residues 643-645 carry the Cell attachment site motif; sequence RGD. N-linked (GlcNAc...) asparagine glycosylation is found at asparagine 719 and asparagine 724.

Belongs to the peptidase M28 family. M28B subfamily. As to quaternary structure, homodimer; disulfide-linked. Binds one transferrin molecule per subunit. Interacts with SH3BP4. Interacts with STEAP3; facilitates TFRC endocytosis in erythroid precursor cells. Post-translationally, stearoylated by ZDHHC6 which inhibits TFRC-mediated activation of the JNK pathway and promotes mitochondrial fragmentation. Stearoylation does not affect iron uptake. In terms of processing, N- and O-glycosylated, phosphorylated and palmitoylated.

The protein resides in the cell membrane. The protein localises to the melanosome. Its function is as follows. Cellular uptake of iron occurs via receptor-mediated endocytosis of ligand-occupied transferrin receptor into specialized endosomes. Endosomal acidification leads to iron release. The apotransferrin-receptor complex is then recycled to the cell surface with a return to neutral pH and the concomitant loss of affinity of apotransferrin for its receptor. Transferrin receptor is necessary for development of erythrocytes and the nervous system. Positively regulates T and B cell proliferation through iron uptake. Acts as a lipid sensor that regulates mitochondrial fusion by regulating activation of the JNK pathway. When dietary levels of stearate (C18:0) are low, promotes activation of the JNK pathway, resulting in HUWE1-mediated ubiquitination and subsequent degradation of the mitofusin MFN2 and inhibition of mitochondrial fusion. When dietary levels of stearate (C18:0) are high, TFRC stearoylation inhibits activation of the JNK pathway and thus degradation of the mitofusin MFN2. Mediates uptake of NICOL1 into fibroblasts where it may regulate extracellular matrix production. This Cricetulus griseus (Chinese hamster) protein is Transferrin receptor protein 1 (TFRC).